Here is a 397-residue protein sequence, read N- to C-terminus: Elongation factor Tu (397 aa).

The tr-type G domain occupies 10–207 (KPHCNIGTIG…EVDKYIPQPE (198 aa)). Positions 19–26 (GHVDHGKT) are G1. 19–26 (GHVDHGKT) provides a ligand contact to GTP. Mg(2+) is bound at residue T26. The interval 61 to 65 (GITIS) is G2. Positions 82–85 (DCPG) are G3. Residues 82 to 86 (DCPGH) and 137 to 140 (NKCD) each bind GTP. Positions 137 to 140 (NKCD) are G4. Residues 175 to 177 (SAL) are G5.

Belongs to the TRAFAC class translation factor GTPase superfamily. Classic translation factor GTPase family. EF-Tu/EF-1A subfamily. Monomer.

It is found in the cytoplasm. It catalyses the reaction GTP + H2O = GDP + phosphate + H(+). GTP hydrolase that promotes the GTP-dependent binding of aminoacyl-tRNA to the A-site of ribosomes during protein biosynthesis. This chain is Elongation factor Tu, found in Azorhizobium caulinodans (strain ATCC 43989 / DSM 5975 / JCM 20966 / LMG 6465 / NBRC 14845 / NCIMB 13405 / ORS 571).